A 213-amino-acid polypeptide reads, in one-letter code: MRSKYIVIEGLEGAGKTTARNVVVETLEQLGIRDMVFTREPGGTQLAEKLRSLVLDIKSVGDEVITDKAEVLMFYAARVQLVETVIKPALANGTWVIGDRHDLSTQAYQGGGRGIDQHMLATLRDAVLGGVRPDLTLYLDVTPEVGLKRARARGELDRIEQESFDFFNRTRARYLELAAQDKSIHTIDATQPLEAVMDAIRTTVTNWVKELDA.

Residue Gly10–Thr17 coordinates ATP.

It belongs to the thymidylate kinase family.

The enzyme catalyses dTMP + ATP = dTDP + ADP. Phosphorylation of dTMP to form dTDP in both de novo and salvage pathways of dTTP synthesis. This is Thymidylate kinase from Escherichia coli O6:H1 (strain CFT073 / ATCC 700928 / UPEC).